Consider the following 190-residue polypeptide: Thiamine biosynthesis protein X (190 aa).

Positions 1–22 (MSISRTVFGIAATAALSAALVA) are cleaved as a signal peptide. Cys-23 carries N-palmitoyl cysteine lipidation. A lipid anchor (S-diacylglycerol cysteine) is attached at Cys-23. A disordered region spans residues 43 to 68 (SQNPTSASSTSTSSATTTSSAPVEED). Positions 47–63 (TSASSTSTSSATTTSSA) are enriched in low complexity.

It is found in the cell membrane. Its function is as follows. Is necessary for biosynthesis of the 4-methyl-5-(beta-hydroxyethyl)thiazol component from which thiamine is formed. The sequence is that of Thiamine biosynthesis protein X (thiX) from Corynebacterium glutamicum (strain ATCC 13032 / DSM 20300 / JCM 1318 / BCRC 11384 / CCUG 27702 / LMG 3730 / NBRC 12168 / NCIMB 10025 / NRRL B-2784 / 534).